The primary structure comprises 454 residues: Bifunctional protein GlmU (454 aa).

The tract at residues 1-226 (MALNVVILAA…AIEVEGANNR (226 aa)) is pyrophosphorylase. UDP-N-acetyl-alpha-D-glucosamine-binding positions include 8–11 (LAAG), K22, Q73, 78–79 (GT), 100–102 (YGD), G137, E151, N166, and N224. D102 contributes to the Mg(2+) binding site. Position 224 (N224) interacts with Mg(2+). The interval 227–247 (VQLAQLERAYQARAAEKLMLE) is linker. The interval 248–454 (GANLRDPARI…GWTRPVKQKK (207 aa)) is N-acetyltransferase. R330 and K348 together coordinate UDP-N-acetyl-alpha-D-glucosamine. H360 acts as the Proton acceptor in catalysis. Residues Y363 and N374 each contribute to the UDP-N-acetyl-alpha-D-glucosamine site. Residues A377, 383–384 (NY), S402, A420, and R437 contribute to the acetyl-CoA site.

The protein in the N-terminal section; belongs to the N-acetylglucosamine-1-phosphate uridyltransferase family. In the C-terminal section; belongs to the transferase hexapeptide repeat family. In terms of assembly, homotrimer. The cofactor is Mg(2+).

Its subcellular location is the cytoplasm. The enzyme catalyses alpha-D-glucosamine 1-phosphate + acetyl-CoA = N-acetyl-alpha-D-glucosamine 1-phosphate + CoA + H(+). It catalyses the reaction N-acetyl-alpha-D-glucosamine 1-phosphate + UTP + H(+) = UDP-N-acetyl-alpha-D-glucosamine + diphosphate. Its pathway is nucleotide-sugar biosynthesis; UDP-N-acetyl-alpha-D-glucosamine biosynthesis; N-acetyl-alpha-D-glucosamine 1-phosphate from alpha-D-glucosamine 6-phosphate (route II): step 2/2. It participates in nucleotide-sugar biosynthesis; UDP-N-acetyl-alpha-D-glucosamine biosynthesis; UDP-N-acetyl-alpha-D-glucosamine from N-acetyl-alpha-D-glucosamine 1-phosphate: step 1/1. It functions in the pathway bacterial outer membrane biogenesis; LPS lipid A biosynthesis. Its function is as follows. Catalyzes the last two sequential reactions in the de novo biosynthetic pathway for UDP-N-acetylglucosamine (UDP-GlcNAc). The C-terminal domain catalyzes the transfer of acetyl group from acetyl coenzyme A to glucosamine-1-phosphate (GlcN-1-P) to produce N-acetylglucosamine-1-phosphate (GlcNAc-1-P), which is converted into UDP-GlcNAc by the transfer of uridine 5-monophosphate (from uridine 5-triphosphate), a reaction catalyzed by the N-terminal domain. The protein is Bifunctional protein GlmU of Shewanella loihica (strain ATCC BAA-1088 / PV-4).